The chain runs to 550 residues: Membrane protein insertase YidC (550 aa).

The chain crosses the membrane as a helical span at residues 6–26; sequence NLLVIALLFVSFMIWQTWEQD. Disordered regions lie at residues 28-54 and 111-132; these read APKPQVQQTTQTTTTAAGSAASQGVPA and QSGLTGRNGPDNPNNNKGRPLY. A compositionally biased stretch (low complexity) spans 30–52; it reads KPQVQQTTQTTTTAAGSAASQGV. A compositionally biased stretch (polar residues) spans 111 to 127; the sequence is QSGLTGRNGPDNPNNNK. Transmembrane regions (helical) follow at residues 346–366, 421–441, 459–479, and 500–520; these read KWIHSFLGNWGFSIIAITFIV, LGGCFPLLIQMPIFLALYYML, LSAQDPYYILPILMGATMFFI, and PVIFTVFFLWFPSGLVLYYIV.

It belongs to the OXA1/ALB3/YidC family. Type 1 subfamily. Interacts with the Sec translocase complex via SecD. Specifically interacts with transmembrane segments of nascent integral membrane proteins during membrane integration.

Its subcellular location is the cell inner membrane. Its function is as follows. Required for the insertion and/or proper folding and/or complex formation of integral membrane proteins into the membrane. Involved in integration of membrane proteins that insert both dependently and independently of the Sec translocase complex, as well as at least some lipoproteins. Aids folding of multispanning membrane proteins. In Cronobacter sakazakii (strain ATCC BAA-894) (Enterobacter sakazakii), this protein is Membrane protein insertase YidC.